A 264-amino-acid polypeptide reads, in one-letter code: GATA transcription factor 2 (264 aa).

The segment covering Ser29–Ser42 has biased composition (low complexity). Disordered regions lie at residues Ser29–Pro57 and Asn96–Trp192. Residues Thr101 to Ser110 show a composition bias toward polar residues. The short motif at Lys114–Arg121 is the Nuclear localization signal element. Positions Ser155–Arg164 are enriched in gly residues. Residues Gly175–Leu229 form a GATA-type zinc finger.

It belongs to the type IV zinc-finger family. Class A subfamily. Mostly expressed in roots. Also expressed in flowers and leaves, and to a lower extent in stems.

It localises to the nucleus. Its function is as follows. Transcriptional activator that specifically binds 5'-GATA-3' or 5'-GAT-3' motifs within gene promoters. May be involved in the regulation of some light-responsive genes. The polypeptide is GATA transcription factor 2 (GATA2) (Arabidopsis thaliana (Mouse-ear cress)).